The following is a 517-amino-acid chain: Protein NETWORKED 4B (517 aa).

Disordered stretches follow at residues 1–29 and 101–159; these read MASS…DSHN and LQKN…EDGD. The span at 10 to 21 shows a compositional bias: basic residues; the sequence is KQFKRSMTKKSH. Residues 21-101 enclose the NAB domain; that stretch reads HSWWWDSHNC…ERYDQASGEL (81 aa). The span at 107–119 shows a compositional bias: low complexity; the sequence is SEIQSQSSLEISS. The span at 121-135 shows a compositional bias: basic and acidic residues; the sequence is TKEKLSRRQSSHKEE. Residues 156-486 adopt a coiled-coil conformation; it reads EDGDEALIRR…EQKREAIRQL (331 aa).

This sequence belongs to the NET family.

Its function is as follows. Plant-specific actin binding protein. May be part of a membrane-cytoskeletal adapter complex. In Arabidopsis thaliana (Mouse-ear cress), this protein is Protein NETWORKED 4B.